The primary structure comprises 249 residues: Segregation and condensation protein A (249 aa).

Belongs to the ScpA family. Component of a cohesin-like complex composed of ScpA, ScpB and the Smc homodimer, in which ScpA and ScpB bind to the head domain of Smc. The presence of the three proteins is required for the association of the complex with DNA.

The protein resides in the cytoplasm. Functionally, participates in chromosomal partition during cell division. May act via the formation of a condensin-like complex containing Smc and ScpB that pull DNA away from mid-cell into both cell halves. The chain is Segregation and condensation protein A from Listeria monocytogenes serotype 4b (strain CLIP80459).